We begin with the raw amino-acid sequence, 142 residues long: Ribosome-binding factor A (142 aa).

The segment covering Asp118–Asp130 has biased composition (basic and acidic residues). Residues Asp118–Asp142 form a disordered region. The segment covering Thr131 to Asp142 has biased composition (acidic residues).

Belongs to the RbfA family. As to quaternary structure, monomer. Binds 30S ribosomal subunits, but not 50S ribosomal subunits or 70S ribosomes.

The protein localises to the cytoplasm. In terms of biological role, one of several proteins that assist in the late maturation steps of the functional core of the 30S ribosomal subunit. Associates with free 30S ribosomal subunits (but not with 30S subunits that are part of 70S ribosomes or polysomes). Required for efficient processing of 16S rRNA. May interact with the 5'-terminal helix region of 16S rRNA. This is Ribosome-binding factor A from Shewanella denitrificans (strain OS217 / ATCC BAA-1090 / DSM 15013).